We begin with the raw amino-acid sequence, 100 residues long: Urease subunit gamma (100 aa).

This sequence belongs to the urease gamma subunit family. In terms of assembly, heterotrimer of UreA (gamma), UreB (beta) and UreC (alpha) subunits. Three heterotrimers associate to form the active enzyme.

It is found in the cytoplasm. It carries out the reaction urea + 2 H2O + H(+) = hydrogencarbonate + 2 NH4(+). It participates in nitrogen metabolism; urea degradation; CO(2) and NH(3) from urea (urease route): step 1/1. The sequence is that of Urease subunit gamma from Haemophilus influenzae (strain PittEE).